The chain runs to 420 residues: Multiple sugar-binding protein (420 aa).

Positions 1 to 22 are cleaved as a signal peptide; the sequence is MKWYKKIGLLGIVGLTSVLLAA. Cysteine 23 carries the N-palmitoyl cysteine lipid modification. The S-diacylglycerol cysteine moiety is linked to residue cysteine 23.

The protein belongs to the bacterial solute-binding protein 1 family.

The protein resides in the cell membrane. Involved in a binding protein-dependent transport system responsible for the uptake of melibiose, raffinose and isomaltotriose. This chain is Multiple sugar-binding protein, found in Streptococcus mutans serotype c (strain ATCC 700610 / UA159).